A 253-amino-acid chain; its full sequence is uncharacterized protein (253 aa).

10–34 (LVTGASSGLGRGLALWLARRGVRVF) serves as a coordination point for NADP(+). Ser-142 lines the substrate pocket. Residue Tyr-155 is the Proton acceptor of the active site.

This sequence belongs to the short-chain dehydrogenases/reductases (SDR) family.

This is an uncharacterized protein from Myxococcus xanthus (strain DK1622).